Reading from the N-terminus, the 971-residue chain is uncharacterized protein (971 aa).

The signal sequence occupies residues 1-24; it reads MQSNLLKVLGVLAIVATLVCFIFA. Residues 127–146 form a disordered region; it reads RTRPGKSNLDDSGQMIPIPR. Transmembrane regions (helical) follow at residues 611 to 631, 721 to 741, 753 to 773, 795 to 815, 832 to 852, and 865 to 885; these read IKAILILYVMTYGAMFLLGFA, LGLSGIIYFIITFIAICIVII, AFMATCILIGIAPLFISFLLF, VVMMAGIIVLTQLFTIYLDFV, FIGTILPIALLNVPIFCINWF, and GVNMQNIVALVIIAYGMYGYV. Residues 933-971 form a disordered region; the sequence is TGRAKSRLEQRNRTLEHAEQNSKKYKKRIGENTNEETLK. Residues 938–954 show a composition bias toward basic and acidic residues; that stretch reads SRLEQRNRTLEHAEQNS.

This sequence belongs to the TrbL/VirB6 family.

It localises to the cell membrane. This is an uncharacterized protein from Rickettsia prowazekii (strain Madrid E).